Reading from the N-terminus, the 301-residue chain is uncharacterized protein (301 aa).

3 residues coordinate a divalent metal cation: Glu-146, Glu-148, and Asp-177.

This sequence belongs to the FAH family.

This is an uncharacterized protein from Staphylococcus epidermidis (strain ATCC 12228 / FDA PCI 1200).